The sequence spans 59 residues: Large ribosomal subunit protein bL32 (59 aa).

The interval 1–59 (MAVQQNKKSPSKRGMHRSHDFLTTAPIAVEPTTGEVHLRHHVSPNGYYRGRKVVKTKND) is disordered. The span at 49-59 (RGRKVVKTKND) shows a compositional bias: basic residues.

This sequence belongs to the bacterial ribosomal protein bL32 family.

This Ralstonia pickettii (strain 12J) protein is Large ribosomal subunit protein bL32.